An 84-amino-acid chain; its full sequence is Cryptic plasmid protein A (84 aa).

This chain is Cryptic plasmid protein A (cppA), found in Neisseria gonorrhoeae.